A 59-amino-acid chain; its full sequence is Large ribosomal subunit protein bL33 (59 aa).

The protein belongs to the bacterial ribosomal protein bL33 family.

The chain is Large ribosomal subunit protein bL33 from Borrelia recurrentis (strain A1).